Consider the following 100-residue polypeptide: Large ribosomal subunit protein uL23 (100 aa).

It belongs to the universal ribosomal protein uL23 family. In terms of assembly, part of the 50S ribosomal subunit. Contacts protein L29, and trigger factor when it is bound to the ribosome.

In terms of biological role, one of the early assembly proteins it binds 23S rRNA. One of the proteins that surrounds the polypeptide exit tunnel on the outside of the ribosome. Forms the main docking site for trigger factor binding to the ribosome. This Photobacterium profundum (strain SS9) protein is Large ribosomal subunit protein uL23.